A 199-amino-acid polypeptide reads, in one-letter code: Oligoribonuclease (199 aa).

In terms of domain architecture, Exonuclease spans 5–170 (LVWIDCEMTG…ADIRESIREL (166 aa)). Tyr-127 is an active-site residue.

Belongs to the oligoribonuclease family.

The protein localises to the cytoplasm. In terms of biological role, 3'-to-5' exoribonuclease specific for small oligoribonucleotides. The protein is Oligoribonuclease of Rhodococcus jostii (strain RHA1).